The primary structure comprises 436 residues: G2/mitotic-specific cyclin-B (436 aa).

Over residues 1–17 (MSTINNPLNIKTRSHSS) the composition is skewed to polar residues. The segment at 1 to 33 (MSTINNPLNIKTRSHSSMGGGMIMDENKVPKSS) is disordered.

The protein belongs to the cyclin family. Cyclin AB subfamily. Interacts with the cdk1 protein kinase to form a serine/threonine kinase holoenzyme complex also known as maturation promoting factor (MPF). The cyclin subunit imparts substrate specificity to the complex.

Essential for the control of the cell cycle at the G2/M (mitosis) transition. The chain is G2/mitotic-specific cyclin-B (cycB) from Dictyostelium discoideum (Social amoeba).